The sequence spans 213 residues: Virulence factor 1 (213 aa).

The protein resides in the host mitochondrion. Plays a role in antagonizing the host innate immune response. This chain is Virulence factor 1, found in Norovirus (isolate Mouse/NoV/United States/MNV1/2002/GV) (MNV-1).